The following is a 339-amino-acid chain: N-acetyl-gamma-glutamyl-phosphate reductase (339 aa).

Cysteine 145 is a catalytic residue.

This sequence belongs to the NAGSA dehydrogenase family. Type 1 subfamily.

Its subcellular location is the cytoplasm. It catalyses the reaction N-acetyl-L-glutamate 5-semialdehyde + phosphate + NADP(+) = N-acetyl-L-glutamyl 5-phosphate + NADPH + H(+). Its pathway is amino-acid biosynthesis; L-arginine biosynthesis; N(2)-acetyl-L-ornithine from L-glutamate: step 3/4. Catalyzes the NADPH-dependent reduction of N-acetyl-5-glutamyl phosphate to yield N-acetyl-L-glutamate 5-semialdehyde. In Thermotoga petrophila (strain ATCC BAA-488 / DSM 13995 / JCM 10881 / RKU-1), this protein is N-acetyl-gamma-glutamyl-phosphate reductase.